A 499-amino-acid chain; its full sequence is ATP synthase subunit alpha (499 aa).

An ATP-binding site is contributed by 169 to 176; the sequence is GDRGTGKT.

It belongs to the ATPase alpha/beta chains family. In terms of assembly, F-type ATPases have 2 components, CF(1) - the catalytic core - and CF(0) - the membrane proton channel. CF(1) has five subunits: alpha(3), beta(3), gamma(1), delta(1), epsilon(1). CF(0) has three main subunits: a(1), b(2) and c(9-12). The alpha and beta chains form an alternating ring which encloses part of the gamma chain. CF(1) is attached to CF(0) by a central stalk formed by the gamma and epsilon chains, while a peripheral stalk is formed by the delta and b chains.

It is found in the cell inner membrane. It carries out the reaction ATP + H2O + 4 H(+)(in) = ADP + phosphate + 5 H(+)(out). In terms of biological role, produces ATP from ADP in the presence of a proton gradient across the membrane. The alpha chain is a regulatory subunit. The sequence is that of ATP synthase subunit alpha from Brachyspira hyodysenteriae (strain ATCC 49526 / WA1).